A 107-amino-acid polypeptide reads, in one-letter code: Cysteine proteinase inhibitor (107 aa).

The 90-residue stretch at 18–107 folds into the Cystatin domain; sequence GGVQDAPAGR…KQLQEFKPAA (90 aa). Positions 63-67 match the Secondary area of contact motif; that stretch reads QVVAG.

The protein belongs to the cystatin family. Phytocystatin subfamily. In terms of tissue distribution, expressed in embryos, developing endosperms, leaves, roots, flowers and pollen grains.

In terms of biological role, inhibits papain, ficin, cathepsin B and, to a lesser extent, chymopapain, but is inactive against bromelain. Inhibits the growth of pathogenic fungi. Regulated by the DOF transcription factors SAD (activator) and BPBF (repressor). This chain is Cysteine proteinase inhibitor (ICY), found in Hordeum vulgare (Barley).